Consider the following 335-residue polypeptide: MTYSKNVFIPVTNICRNQCGYCGFRREPGQPGARLMKPEEVISVLENGVRAGCTEALFTFGERAEEVPGYGEMLEEIGYSSTLEYLVFLCETAIDIGILPHTNAGIMTRSELEALKPLNASMGLMLESTAVLAAHKDCPGKIPERRLETIREAGKLKIPYTTGLLIGIGESRDDRIESLEAIAALHREYGHIQEVIIQNFAPKPGTEMENFPEPAVEEMMDSVELAARILPGDVAVQVAPNLIDPKSLIAKGVTDLGGISPLTIDWINPEAEWPDVKNLQKKLGDIPLKERLPVYPPYVKKGWYSERIGSLIKRLSDNSGYRKQPGTENAEDSEK.

In terms of domain architecture, Radical SAM core spans 1–246 (MTYSKNVFIP…QVAPNLIDPK (246 aa)). Positions 15, 19, and 22 each coordinate [4Fe-4S] cluster.

The protein belongs to the radical SAM superfamily. CofG family. As to quaternary structure, consists of two subunits, CofG and CofH. The cofactor is [4Fe-4S] cluster.

The catalysed reaction is 5-amino-5-(4-hydroxybenzyl)-6-(D-ribitylimino)-5,6-dihydrouracil + S-adenosyl-L-methionine = 7,8-didemethyl-8-hydroxy-5-deazariboflavin + 5'-deoxyadenosine + L-methionine + NH4(+) + H(+). It participates in cofactor biosynthesis; coenzyme F0 biosynthesis. Functionally, catalyzes the radical-mediated synthesis of 7,8-didemethyl-8-hydroxy-5-deazariboflavin from 5-amino-5-(4-hydroxybenzyl)-6-(D-ribitylimino)-5,6-dihydrouracil. The sequence is that of 7,8-didemethyl-8-hydroxy-5-deazariboflavin synthase from Methanosarcina mazei (strain ATCC BAA-159 / DSM 3647 / Goe1 / Go1 / JCM 11833 / OCM 88) (Methanosarcina frisia).